The sequence spans 201 residues: Small ribosomal subunit protein uS4c (201 aa).

The segment at G20–G39 is disordered. The 62-residue stretch at M89 to N150 folds into the S4 RNA-binding domain.

The protein belongs to the universal ribosomal protein uS4 family. In terms of assembly, part of the 30S ribosomal subunit. Contacts protein S5. The interaction surface between S4 and S5 is involved in control of translational fidelity.

It localises to the plastid. Its subcellular location is the chloroplast. In terms of biological role, one of the primary rRNA binding proteins, it binds directly to 16S rRNA where it nucleates assembly of the body of the 30S subunit. Functionally, with S5 and S12 plays an important role in translational accuracy. The chain is Small ribosomal subunit protein uS4c (rps4) from Oryza nivara (Indian wild rice).